The sequence spans 590 residues: MHRYRSHTCGALRESNIGETIRLSGWVHRVRDHGGVLFIDLRDHYGLTQCVVDPDSPAFSLAEKLRSEFVIKMDGKVRRRPEGTDNDDLPTGKIEIYVSEIEVLGPAGDLPLPVFGDQEYPEDIRLKYRFLDLRREKLHQNIMTRVEIIKSMRRRMEGQGFFEFNTPILTASSPEGARDFLVPSRIHPGKFYALPQAPQQYKQLLMMSGFDRYFQIAPCFRDEDPRADRLPGEFYQLDVEMSFVTQEDVFAAMEPVITGVFEEFAKGKPVSKNWRRIPFAEALRKYGSDKPDLRNPIEMQEVSEHFRGSGFKVFARMLEDPKNQVWAIPAPGGGSRAFCDRMNSWAQGEGQPGLGYIMWREGGEGAGPLANNIGPERTAAIRAQIGVKEGDAAFFVAGDPDKFWKFSGLARNKVGEELNLTDKERFELAWIVDFPMYEYNEDDKKVDFSHNPFSMPQGGLEALKGQDPLTIKAFQYDITCNGYEIASGGIRNHVPEAMVKAFEIAGYGEQEVVDRFGGMYRAFQYGAPPHGGMAAGVDRIVMLLCGTTNLREISLFPMNQQAMDLLMGAPSEATTKQLRELHVRVNLPQK.

Position 175 (E175) interacts with L-aspartate. The aspartate stretch occupies residues 199 to 202 (QQYK). 2 residues coordinate L-aspartate: R221 and H450. 221–223 (RDE) contributes to the ATP binding site. Residue E484 coordinates ATP. An L-aspartate-binding site is contributed by R491. Residue 536-539 (GVDR) coordinates ATP.

The protein belongs to the class-II aminoacyl-tRNA synthetase family. Type 1 subfamily. In terms of assembly, homodimer.

Its subcellular location is the cytoplasm. It catalyses the reaction tRNA(Asx) + L-aspartate + ATP = L-aspartyl-tRNA(Asx) + AMP + diphosphate. Functionally, aspartyl-tRNA synthetase with relaxed tRNA specificity since it is able to aspartylate not only its cognate tRNA(Asp) but also tRNA(Asn). Reaction proceeds in two steps: L-aspartate is first activated by ATP to form Asp-AMP and then transferred to the acceptor end of tRNA(Asp/Asn). The protein is Aspartate--tRNA(Asp/Asn) ligase of Bradyrhizobium diazoefficiens (strain JCM 10833 / BCRC 13528 / IAM 13628 / NBRC 14792 / USDA 110).